Consider the following 359-residue polypeptide: Probable tyrosine-protein phosphatase pir-2 (359 aa).

The Tyrosine-protein phosphatase domain occupies 16-191 (QPVGNVIPRT…AKDKRDKQVD (176 aa)). The active-site Phosphocysteine intermediate is the cysteine 131. Residues 184 to 199 (DKRDKQVDSDSDSSER) are compositionally biased toward basic and acidic residues. Disordered regions lie at residues 184–211 (DKRDKQVDSDSDSSERQRKKKNKRKHRE), 234–259 (SVSGTDYQNSPNGVSVDPGQPQPHHW), and 274–328 (PVAN…RNRM). The span at 200-210 (QRKKKNKRKHR) shows a compositional bias: basic residues. Over residues 234–246 (SVSGTDYQNSPNG) the composition is skewed to polar residues. The span at 290-309 (PQEEEEFEEDFEEIEEETET) shows a compositional bias: acidic residues. Residues 319 to 328 (SKRRARRNRM) are compositionally biased toward basic residues.

It belongs to the protein-tyrosine phosphatase family. Non-receptor class CDC14 subfamily.

The catalysed reaction is O-phospho-L-tyrosyl-[protein] + H2O = L-tyrosyl-[protein] + phosphate. The sequence is that of Probable tyrosine-protein phosphatase pir-2 from Caenorhabditis elegans.